Consider the following 385-residue polypeptide: Circadian-associated transcriptional repressor (385 aa).

The segment covering 1–26 (MDSPSSVSSYSSYSLSSSFPTSPVNS) has biased composition (low complexity). Disordered regions lie at residues 1 to 108 (MDSP…SLNT), 203 to 233 (GGGK…EKMD), and 365 to 385 (GHRE…LLNL). Over residues 33–45 (DSEREDKGAHGPR) the composition is skewed to basic and acidic residues. The segment covering 70–79 (VSGNQHTPSH) has biased composition (polar residues).

Interacts with PER2, CRY2, BHLHE41, HDAC1 and NR3C1. Interacts with BMAL1.

It is found in the nucleus. The protein localises to the PML body. Transcriptional repressor which forms a negative regulatory component of the circadian clock and acts independently of the circadian transcriptional repressors: CRY1, CRY2 and BHLHE41. In a histone deacetylase-dependent manner represses the transcriptional activator activity of the CLOCK-BMAL1 heterodimer. Abrogates the interaction of BMAL1 with the transcriptional coactivator CREBBP and can repress the histone acetyl-transferase activity of the CLOCK-BMAL1 heterodimer, reducing histone acetylation of its target genes. Rhythmically binds the E-box elements (5'-CACGTG-3') on circadian gene promoters and its occupancy shows circadian oscillation antiphasic to BMAL1. Interacts with the glucocorticoid receptor (NR3C1) and contributes to the repressive function in the glucocorticoid response. This chain is Circadian-associated transcriptional repressor (CIART), found in Homo sapiens (Human).